A 360-amino-acid chain; its full sequence is Phosphoserine aminotransferase (360 aa).

L-glutamate is bound at residue arginine 42. Tryptophan 102, threonine 152, aspartate 171, and glutamine 194 together coordinate pyridoxal 5'-phosphate. Lysine 195 bears the N6-(pyridoxal phosphate)lysine mark. Residue asparagine 237–threonine 238 participates in pyridoxal 5'-phosphate binding.

It belongs to the class-V pyridoxal-phosphate-dependent aminotransferase family. SerC subfamily. As to quaternary structure, homodimer. Pyridoxal 5'-phosphate serves as cofactor.

It localises to the cytoplasm. It catalyses the reaction O-phospho-L-serine + 2-oxoglutarate = 3-phosphooxypyruvate + L-glutamate. It carries out the reaction 4-(phosphooxy)-L-threonine + 2-oxoglutarate = (R)-3-hydroxy-2-oxo-4-phosphooxybutanoate + L-glutamate. Its pathway is amino-acid biosynthesis; L-serine biosynthesis; L-serine from 3-phospho-D-glycerate: step 2/3. It functions in the pathway cofactor biosynthesis; pyridoxine 5'-phosphate biosynthesis; pyridoxine 5'-phosphate from D-erythrose 4-phosphate: step 3/5. Its function is as follows. Catalyzes the reversible conversion of 3-phosphohydroxypyruvate to phosphoserine and of 3-hydroxy-2-oxo-4-phosphonooxybutanoate to phosphohydroxythreonine. The polypeptide is Phosphoserine aminotransferase (Coxiella burnetii (strain CbuG_Q212) (Coxiella burnetii (strain Q212))).